A 149-amino-acid polypeptide reads, in one-letter code: Transcriptional repressor NrdR (149 aa).

A zinc finger spans residues 3-34 (CPFCFAVDTKVIDSRLVGEGSSVRRRRQCLVC). Positions 49–139 (PRVIKSNDVR…VYRSFEDIKD (91 aa)) constitute an ATP-cone domain.

This sequence belongs to the NrdR family. It depends on Zn(2+) as a cofactor.

Functionally, negatively regulates transcription of bacterial ribonucleotide reductase nrd genes and operons by binding to NrdR-boxes. The sequence is that of Transcriptional repressor NrdR from Salmonella schwarzengrund (strain CVM19633).